The chain runs to 661 residues: Zinc finger protein 81 (661 aa).

In terms of domain architecture, KRAB spans 21-92; the sequence is VSFEDVTVDF…EGEAPHQSCS (72 aa). A Glycyl lysine isopeptide (Lys-Gly) (interchain with G-Cter in SUMO2) cross-link involves residue lysine 266. 12 consecutive C2H2-type zinc fingers follow at residues 330-352, 358-380, 386-408, 414-436, 442-464, 470-492, 498-520, 526-548, 554-576, 582-604, 610-632, and 638-660; these read YICTKCGKAFIQNSELIMHEKTH, YKCNECGKSFFQVSSLLRHQTTH, FECSECGKGFSLNSALNIHQKIH, HKCSECGKAFTQKSTLRMHQRIH, YICTQCGQAFIQKAHLIAHQRIH, YECSDCGKSFPSKSQLQMHKRIH, YICTECGKAFTNRSNLNTHQKSH, YICAECGKAFTDRSNFNKHQTIH, YVCADCGRAFIQKSELITHQRIH, YKCPDCEKSFSKKPHLKVHQRIH, and YKCSDCGKGFTQKSVLSMHRNIH.

The protein belongs to the krueppel C2H2-type zinc-finger protein family.

Its subcellular location is the nucleus. Its function is as follows. May be involved in transcriptional regulation. The chain is Zinc finger protein 81 (ZNF81) from Homo sapiens (Human).